A 459-amino-acid polypeptide reads, in one-letter code: Transcriptional coactivator YAP1-A (459 aa).

The segment covering 1 to 13 (MEPGSQQQPSAPA) has biased composition (low complexity). Positions 1–22 (MEPGSQQQPSAPAQQPPPVGHQ) are disordered. S30, S80, S98, and S134 each carry phosphoserine; by LATS1 and LATS2. Disordered stretches follow at residues 65–99 (FKQP…AHSS) and 126–145 (SAPH…PLPP). 2 consecutive WW domains span residues 141-174 (VPLP…DPRK) and 199-232 (GPLP…DPRL). The disordered stretch occupies residues 246–268 (NAPVKAPPALPPPSPQTGVLGSG). Positions 250-260 (KAPPALPPPSP) are enriched in pro residues. A transactivation domain region spans residues 261 to 459 (QTGVLGSGGN…LDKESFLTWL (199 aa)). A coiled-coil region spans residues 269-297 (GNQQMRLQQLQMEKERLRLKHQELLRQVR). The disordered stretch occupies residues 344–363 (GTYHSRDESTESGLSMSSYS). The span at 354-363 (ESGLSMSSYS) shows a compositional bias: polar residues.

It belongs to the YAP1 family. As to quaternary structure, interacts with tead1. Post-translationally, phosphorylated by lats1 and lats2; leading to cytoplasmic translocation and inactivation.

It localises to the cytoplasm. It is found in the nucleus. The protein localises to the cell junction. The protein resides in the tight junction. Its subcellular location is the cell membrane. Functionally, transcriptional regulator which can act both as a coactivator and a corepressor and is the critical downstream regulatory target in the Hippo signaling pathway that plays a pivotal role in organ size control and tumor suppression by restricting proliferation and promoting apoptosis. Plays a key role in tissue tension and 3D tissue shape by regulating cortical actomyosin network formation. Required for expansion of the neural plate and neural plate border zone progenitor pools. Acts as a direct regulator of pax3 expression via interaction with tead1. This is Transcriptional coactivator YAP1-A from Xenopus laevis (African clawed frog).